The sequence spans 513 residues: Cytochrome P450 72A552 (513 aa).

The chain crosses the membrane as a helical span at residues 2–22 (EISVASVTVSVVIAVVTWWVW). A heme-binding site is contributed by Cys460.

It belongs to the cytochrome P450 family. Requires heme as cofactor.

It localises to the membrane. The catalysed reaction is oleanolate + reduced [NADPH--hemoprotein reductase] + O2 = hederagenin + oxidized [NADPH--hemoprotein reductase] + H2O + H(+). Functionally, catalyzes the oxidation of oleanolate at the C-23 position to form hederagenin. The chain is Cytochrome P450 72A552 from Barbarea vulgaris (Yellow rocket).